Consider the following 384-residue polypeptide: GTPase Obg (384 aa).

In terms of domain architecture, Obg spans 1–159; that stretch reads MKFIDEAKIE…RSLQLELKVL (159 aa). Positions 20–46 are disordered; the sequence is ATSFRREKFVPRGGPDGGDGGKGGSVW. The segment covering 33–43 has biased composition (gly residues); sequence GPDGGDGGKGG. The region spanning 160–348 is the OBG-type G domain; that stretch reads ADVGLLGMPN…LVHQINQYLI (189 aa). GTP is bound by residues 166–173, 191–195, 213–216, 284–287, and 329–331; these read GMPNAGKS, FTTLH, DIPG, NKLD, and SAL. Residues serine 173 and threonine 193 each contribute to the Mg(2+) site. A disordered region spans residues 364–384; sequence ATNVEIAEQQPKTDTGVFKPE.

The protein belongs to the TRAFAC class OBG-HflX-like GTPase superfamily. OBG GTPase family. Monomer. Mg(2+) is required as a cofactor.

Its subcellular location is the cytoplasm. An essential GTPase which binds GTP, GDP and possibly (p)ppGpp with moderate affinity, with high nucleotide exchange rates and a fairly low GTP hydrolysis rate. Plays a role in control of the cell cycle, stress response, ribosome biogenesis and in those bacteria that undergo differentiation, in morphogenesis control. The sequence is that of GTPase Obg from Neisseria meningitidis serogroup A / serotype 4A (strain DSM 15465 / Z2491).